The sequence spans 428 residues: Serine--tRNA ligase (428 aa).

235–237 (TAE) is a binding site for L-serine. Position 266–268 (266–268 (RSE)) interacts with ATP. Glu289 contributes to the L-serine binding site. An ATP-binding site is contributed by 353 to 356 (EISS). Ser389 contributes to the L-serine binding site.

Belongs to the class-II aminoacyl-tRNA synthetase family. Type-1 seryl-tRNA synthetase subfamily. In terms of assembly, homodimer. The tRNA molecule binds across the dimer.

The protein resides in the cytoplasm. It carries out the reaction tRNA(Ser) + L-serine + ATP = L-seryl-tRNA(Ser) + AMP + diphosphate + H(+). It catalyses the reaction tRNA(Sec) + L-serine + ATP = L-seryl-tRNA(Sec) + AMP + diphosphate + H(+). Its pathway is aminoacyl-tRNA biosynthesis; selenocysteinyl-tRNA(Sec) biosynthesis; L-seryl-tRNA(Sec) from L-serine and tRNA(Sec): step 1/1. Functionally, catalyzes the attachment of serine to tRNA(Ser). Is also able to aminoacylate tRNA(Sec) with serine, to form the misacylated tRNA L-seryl-tRNA(Sec), which will be further converted into selenocysteinyl-tRNA(Sec). This is Serine--tRNA ligase from Shewanella baltica (strain OS155 / ATCC BAA-1091).